Here is a 142-residue protein sequence, read N- to C-terminus: MERTLLLVKPDGVNRGLSGEILGRMEKLGLKMIGLRMLQMDAVLADKHYAPHRERPFFKDLVTYITSGPIVAAVFEGENAVEKMRKAMGATDPAKSEKGTVRGDLGINIEQNTVHGSDSAENAKHEISLFFSESELVNYDRR.

ATP is bound by residues Lys9, Phe57, Arg85, Thr91, Arg102, and Asn112. Residues 87–106 are disordered; that stretch reads AMGATDPAKSEKGTVRGDLG. His115 serves as the catalytic Pros-phosphohistidine intermediate.

This sequence belongs to the NDK family. Homotetramer. Mg(2+) is required as a cofactor.

The protein localises to the cytoplasm. It catalyses the reaction a 2'-deoxyribonucleoside 5'-diphosphate + ATP = a 2'-deoxyribonucleoside 5'-triphosphate + ADP. The enzyme catalyses a ribonucleoside 5'-diphosphate + ATP = a ribonucleoside 5'-triphosphate + ADP. Functionally, major role in the synthesis of nucleoside triphosphates other than ATP. The ATP gamma phosphate is transferred to the NDP beta phosphate via a ping-pong mechanism, using a phosphorylated active-site intermediate. The protein is Nucleoside diphosphate kinase of Dehalococcoides mccartyi (strain ATCC BAA-2266 / KCTC 15142 / 195) (Dehalococcoides ethenogenes (strain 195)).